Consider the following 360-residue polypeptide: Probable mannan endo-1,4-beta-mannosidase A (360 aa).

The N-terminal stretch at methionine 1–alanine 18 is a signal peptide. Asparagine 142 and asparagine 178 together coordinate substrate. The active-site Proton donor is the glutamate 179. Tyrosine 254 provides a ligand contact to substrate. Residue glutamate 287 is the Nucleophile of the active site. Asparagine 307 carries N-linked (GlcNAc...) asparagine glycosylation. Substrate is bound at residue tryptophan 317.

The protein belongs to the glycosyl hydrolase 5 (cellulase A) family.

It localises to the secreted. It catalyses the reaction Random hydrolysis of (1-&gt;4)-beta-D-mannosidic linkages in mannans, galactomannans and glucomannans.. Its function is as follows. Endo-1,4-mannanase, a crucial enzyme for depolymerization of seed galactomannans and wood galactoglucomannans. The protein is Probable mannan endo-1,4-beta-mannosidase A (manA) of Aspergillus clavatus (strain ATCC 1007 / CBS 513.65 / DSM 816 / NCTC 3887 / NRRL 1 / QM 1276 / 107).